A 361-amino-acid polypeptide reads, in one-letter code: Phospho-N-acetylmuramoyl-pentapeptide-transferase (361 aa).

10 helical membrane-spanning segments follow: residues 26 to 46, 73 to 93, 98 to 118, 139 to 159, 168 to 188, 200 to 220, 237 to 257, 264 to 284, 289 to 309, and 339 to 359; these read SILA…VLIQ, TMGG…WGDL, VWLV…DDWI, IFGL…AAVT, IALP…IVGF, GLAI…AYAS, AGDL…FLWF, VFMG…IAVI, LVLV…IIQV, and VIVR…ATLK.

It belongs to the glycosyltransferase 4 family. MraY subfamily. Mg(2+) is required as a cofactor.

It localises to the cell inner membrane. The catalysed reaction is UDP-N-acetyl-alpha-D-muramoyl-L-alanyl-gamma-D-glutamyl-meso-2,6-diaminopimeloyl-D-alanyl-D-alanine + di-trans,octa-cis-undecaprenyl phosphate = di-trans,octa-cis-undecaprenyl diphospho-N-acetyl-alpha-D-muramoyl-L-alanyl-D-glutamyl-meso-2,6-diaminopimeloyl-D-alanyl-D-alanine + UMP. The protein operates within cell wall biogenesis; peptidoglycan biosynthesis. Its function is as follows. Catalyzes the initial step of the lipid cycle reactions in the biosynthesis of the cell wall peptidoglycan: transfers peptidoglycan precursor phospho-MurNAc-pentapeptide from UDP-MurNAc-pentapeptide onto the lipid carrier undecaprenyl phosphate, yielding undecaprenyl-pyrophosphoryl-MurNAc-pentapeptide, known as lipid I. The protein is Phospho-N-acetylmuramoyl-pentapeptide-transferase of Xylella fastidiosa (strain M12).